A 610-amino-acid polypeptide reads, in one-letter code: Glutamine--fructose-6-phosphate aminotransferase [isomerizing] (610 aa).

Cys-2 acts as the Nucleophile; for GATase activity in catalysis. A Glutamine amidotransferase type-2 domain is found at 2 to 219 (CGIVGYAGKK…SGEWGYFSQN (218 aa)). SIS domains are found at residues 287–431 (SKDV…SDEE) and 459–600 (MSSH…PDQP). Residue Lys-605 is the For Fru-6P isomerization activity of the active site.

Homodimer.

It is found in the cytoplasm. It carries out the reaction D-fructose 6-phosphate + L-glutamine = D-glucosamine 6-phosphate + L-glutamate. Catalyzes the first step in hexosamine metabolism, converting fructose-6P into glucosamine-6P using glutamine as a nitrogen source. The chain is Glutamine--fructose-6-phosphate aminotransferase [isomerizing] from Leptospira interrogans serogroup Icterohaemorrhagiae serovar copenhageni (strain Fiocruz L1-130).